A 551-amino-acid chain; its full sequence is MPQLNSGGGDELGANDELIRFKDEGEQEEKSPGEGSAEGDLADVKSSLVNESENHSSDSDSEVERRPPPRETFEKPRDYLSEAFRRQQDAAFFKGPPYAGYPFLMIPDLGGHYLPNGALSPSARAYLQMKWPLLDSPSTAGLKDARSPSPAHLSNKVPVVQHPHHMHPLTPLITYSNEHFSPGTPPGHLSPEIDPKTGIPRPPHPSELSPYYPLSPGAVGQIPHPLGWLVPQQGQPMYSIPPGGFRHPYPALAMNASMSSLVSSRFSPHMVPPPHHSLHTSGIPHPAIVSPIVKQEPSSGNISPNLSTKSNVVVKKEEEKKPHIKKPLNAFMLYMKEMRAKVVAECTLKESAAINQILGRRWHSLSREEQAKYYELARKERQLHSQLYPSWSARDNYGKKKKRKREKQSPEMENYTKTKKMCVQHFPSDKSCDSPASSHGSMLDSPATPSAALASPAAPAATHSEQAQPLSLTTKPEARALSHSAAFLASKSPSSSSLSGHLPSPVGSPLLSRPIPLTSSILSPPGVFPSALQALPLLQAQPLSLVTRSSD.

Over residues 1–11 the composition is skewed to gly residues; it reads MPQLNSGGGDE. Residues 1-61 form an interaction with CTNNB1-A region; it reads MPQLNSGGGD…SENHSSDSDS (61 aa). Disordered regions lie at residues 1–77, 183–213, 391–474, and 492–515; these read MPQL…EKPR, GTPP…PYYP, WSAR…SLTT, and SPSS…SRPI. 2 stretches are compositionally biased toward basic and acidic residues: residues 17 to 32 and 52 to 77; these read ELIR…EKSP and SENH…EKPR. The segment at 109–312 is interaction with AES and TLE4-A; the sequence is LGGHYLPNGA…SPNLSTKSNV (204 aa). Residues 324–392 constitute a DNA-binding region (HMG box); the sequence is IKKPLNAFML…LHSQLYPSWS (69 aa). Residues 407-416 are compositionally biased toward basic and acidic residues; it reads KQSPEMENYT. An interaction with CTBP-B region spans residues 408–551; the sequence is QSPEMENYTK…PLSLVTRSSD (144 aa). The span at 445-464 shows a compositional bias: low complexity; it reads SPATPSAALASPAAPAATHS. Residues 465–474 show a composition bias toward polar residues; sequence EQAQPLSLTT.

This sequence belongs to the TCF/LEF family. In terms of assembly, interacts with csnk1e, ctnnb1-A, ctbp-B, dact1-A and gsk3b. May interact with ase and tle4-A. Interacts with tle1-B. Phosphorylated. Phosphorylation by csnk1e promotes binding to ctnnb1-A while phosphorylation by gsk3b may reverse this effect.

The protein localises to the nucleus. Its function is as follows. Participates in the Wnt signaling pathway. Binds to DNA and acts as a repressor in the absence of ctnnb1-A and possibly ctnnb1-B, and as an activator in the presence of these proteins. Required early in development for the establishment of the dorsal body axis in response to maternal Wnt signaling. The sequence is that of Transcription factor 7-like 1-B (tcf7l1-b) from Xenopus laevis (African clawed frog).